A 302-amino-acid polypeptide reads, in one-letter code: Sulfate adenylyltransferase subunit 2 (302 aa).

The interval 280–302 (RQGRAIDHDQSGSMELKKRQGYF) is disordered.

This sequence belongs to the PAPS reductase family. CysD subfamily. As to quaternary structure, heterodimer composed of CysD, the smaller subunit, and CysN.

It carries out the reaction sulfate + ATP + H(+) = adenosine 5'-phosphosulfate + diphosphate. It participates in sulfur metabolism; hydrogen sulfide biosynthesis; sulfite from sulfate: step 1/3. Its function is as follows. With CysN forms the ATP sulfurylase (ATPS) that catalyzes the adenylation of sulfate producing adenosine 5'-phosphosulfate (APS) and diphosphate, the first enzymatic step in sulfur assimilation pathway. APS synthesis involves the formation of a high-energy phosphoric-sulfuric acid anhydride bond driven by GTP hydrolysis by CysN coupled to ATP hydrolysis by CysD. This Vibrio cholerae serotype O1 (strain ATCC 39315 / El Tor Inaba N16961) protein is Sulfate adenylyltransferase subunit 2.